A 502-amino-acid chain; its full sequence is Probable cytosol aminopeptidase (502 aa).

Mn(2+)-binding residues include Lys265 and Asp270. Lys277 is an active-site residue. The Mn(2+) site is built by Asp288, Asp347, and Glu349. The active site involves Arg351.

It belongs to the peptidase M17 family. It depends on Mn(2+) as a cofactor.

It localises to the cytoplasm. The catalysed reaction is Release of an N-terminal amino acid, Xaa-|-Yaa-, in which Xaa is preferably Leu, but may be other amino acids including Pro although not Arg or Lys, and Yaa may be Pro. Amino acid amides and methyl esters are also readily hydrolyzed, but rates on arylamides are exceedingly low.. It carries out the reaction Release of an N-terminal amino acid, preferentially leucine, but not glutamic or aspartic acids.. Presumably involved in the processing and regular turnover of intracellular proteins. Catalyzes the removal of unsubstituted N-terminal amino acids from various peptides. The polypeptide is Probable cytosol aminopeptidase (Rickettsia bellii (strain RML369-C)).